The sequence spans 289 residues: MAEECSGNCDSCGSSSDCSDTKKMMEQQNAQIRDNMSKIKYKIAVMSGKGGVGKSTVTVNLAATLNMMGYKVGVLDGDIHGPNIPQMLGVDQIQPMADENGIYPVSTPQGIKTMSIGYFLPDKNTPIIWRGPKASGAIRQFLSDVNWGELDFLLIDTPPGSGDIQITTLQAIPDIDGVVIVTTPEEVSVLDARKSVSAANTLEIPIIGIVENMGGFVCPECDKVIDIFGKGGGEKAAKELNVFFLGRIPLDIKARVASDRGVPMVTMDCKASEEFKKVVNTVLERIKKE.

Residues 1–18 (MAEECSGNCDSCGSSSDC) show a composition bias toward low complexity. Residues 1–20 (MAEECSGNCDSCGSSSDCSD) form a disordered region. 48–55 (GKGGVGKS) is a binding site for ATP.

This sequence belongs to the Mrp/NBP35 ATP-binding proteins family. As to quaternary structure, homodimer.

Functionally, binds and transfers iron-sulfur (Fe-S) clusters to target apoproteins. Can hydrolyze ATP. This Methanococcus maripaludis (strain DSM 14266 / JCM 13030 / NBRC 101832 / S2 / LL) protein is Iron-sulfur cluster carrier protein.